We begin with the raw amino-acid sequence, 128 residues long: Glycine cleavage system H protein (128 aa).

Residues 24-106 (SVTVGITAHA…YGDGWFFKIK (83 aa)) enclose the Lipoyl-binding domain. K65 bears the N6-lipoyllysine mark.

It belongs to the GcvH family. The glycine cleavage system is composed of four proteins: P, T, L and H. The cofactor is (R)-lipoate.

Functionally, the glycine cleavage system catalyzes the degradation of glycine. The H protein shuttles the methylamine group of glycine from the P protein to the T protein. The protein is Glycine cleavage system H protein of Chromobacterium violaceum (strain ATCC 12472 / DSM 30191 / JCM 1249 / CCUG 213 / NBRC 12614 / NCIMB 9131 / NCTC 9757 / MK).